A 379-amino-acid chain; its full sequence is Cathepsin B-like protease 1 (379 aa).

The signal sequence occupies residues 1 to 30 (MADSCCIRLHLLASVFLLLFSSFNLQGIAA). A propeptide spans 31–102 (ENLSKQKLTS…PIVRHDLSLK (72 aa)) (activation peptide). 2 N-linked (GlcNAc...) asparagine glycosylation sites follow: asparagine 32 and asparagine 69. Disulfide bonds link cysteine 116–cysteine 165, cysteine 148–cysteine 191, cysteine 182–cysteine 236, cysteine 183–cysteine 187, cysteine 213–cysteine 240, and cysteine 222–cysteine 227. Cysteine 151 is an active-site residue. Asparagine 171 is a glycosylation site (N-linked (GlcNAc...) asparagine). Active-site residues include histidine 306 and asparagine 327. N-linked (GlcNAc...) asparagine glycosylation occurs at asparagine 330. Positions 363–379 (NVFKGITTSDDLLVSSV) are cleaved as a propeptide — removed in mature form.

Belongs to the peptidase C1 family.

In terms of biological role, thiol protease that plays a central role in plant programmed cell death (PCD). In addition to its role in protein degradation, may cleave and/or degrade a number of target proteins, activating signaling towards PCD. Contributes to the increase of caspase-3-like activity after UV-C-induced PCD and is required for abiotic stress-induced PCD. Functions redundantly with CATHB2 and CATHB3 in basal defense and distinct forms of plant programmed cell death (PCD). Participates in the establishment of basal resistance against the bacterial pathogen Pseudomonase syringae pv. tomato DC3000. Required for full levels of PCD during resistance (R) gene-mediated hypersensitive response (HR). Involved in the regulation of senescence, a developmental form of PCD in plants. This Arabidopsis thaliana (Mouse-ear cress) protein is Cathepsin B-like protease 1.